A 478-amino-acid polypeptide reads, in one-letter code: Glycogen synthase (478 aa).

ADP-alpha-D-glucose is bound at residue K15.

This sequence belongs to the glycosyltransferase 1 family. Bacterial/plant glycogen synthase subfamily.

It catalyses the reaction [(1-&gt;4)-alpha-D-glucosyl](n) + ADP-alpha-D-glucose = [(1-&gt;4)-alpha-D-glucosyl](n+1) + ADP + H(+). The protein operates within glycan biosynthesis; glycogen biosynthesis. In terms of biological role, synthesizes alpha-1,4-glucan chains using ADP-glucose. This is Glycogen synthase from Clostridium botulinum (strain Alaska E43 / Type E3).